Consider the following 223-residue polypeptide: Ubiquitin carboxyl-terminal hydrolase isozyme L1 (223 aa).

Position 1 is an N-acetylmethionine (Met1). The 220-residue stretch at 2-221 folds into the UCH catalytic domain; the sequence is QLKPMEINPE…VRFSAVALCK (220 aa). The tract at residues 5-10 is interaction with ubiquitin; it reads PMEINP. Cys90 acts as the Nucleophile in catalysis. Residue Ser125 is modified to Phosphoserine. His161 functions as the Proton donor in the catalytic mechanism. The segment at 211 to 216 is interaction with ubiquitin; the sequence is EVRFSA. A lipid anchor (S-farnesyl cysteine) is attached at Cys220. A propeptide spans 221-223 (removed in mature form); the sequence is KCA.

This sequence belongs to the peptidase C12 family. Monomer. Homodimer. Interacts with COPS5 and SNCA. Post-translationally, O-glycosylated.

Its subcellular location is the cytoplasm. The protein resides in the endoplasmic reticulum membrane. The enzyme catalyses Thiol-dependent hydrolysis of ester, thioester, amide, peptide and isopeptide bonds formed by the C-terminal Gly of ubiquitin (a 76-residue protein attached to proteins as an intracellular targeting signal).. Ubiquitin-protein hydrolase involved both in the processing of ubiquitin precursors and of ubiquitinated proteins. This enzyme is a thiol protease that recognizes and hydrolyzes a peptide bond at the C-terminal glycine of ubiquitin. Also binds to free monoubiquitin and may prevent its degradation in lysosomes. The homodimer may have ATP-independent ubiquitin ligase activity. This Monodelphis domestica (Gray short-tailed opossum) protein is Ubiquitin carboxyl-terminal hydrolase isozyme L1 (UCHL1).